A 190-amino-acid polypeptide reads, in one-letter code: 7-methyl-GTP pyrophosphatase (190 aa).

The active-site Proton acceptor is the aspartate 69.

Belongs to the Maf family. YceF subfamily. It depends on a divalent metal cation as a cofactor.

It is found in the cytoplasm. The enzyme catalyses N(7)-methyl-GTP + H2O = N(7)-methyl-GMP + diphosphate + H(+). Functionally, nucleoside triphosphate pyrophosphatase that hydrolyzes 7-methyl-GTP (m(7)GTP). May have a dual role in cell division arrest and in preventing the incorporation of modified nucleotides into cellular nucleic acids. In Xanthomonas axonopodis pv. citri (strain 306), this protein is 7-methyl-GTP pyrophosphatase.